The primary structure comprises 137 residues: Nucleoside diphosphate kinase (137 aa).

ATP is bound by residues Lys9, Phe57, Arg85, Thr91, Arg102, and Asn112. The active-site Pros-phosphohistidine intermediate is His115.

It belongs to the NDK family. Homotetramer. Mg(2+) serves as cofactor.

It localises to the cytoplasm. The enzyme catalyses a 2'-deoxyribonucleoside 5'-diphosphate + ATP = a 2'-deoxyribonucleoside 5'-triphosphate + ADP. It carries out the reaction a ribonucleoside 5'-diphosphate + ATP = a ribonucleoside 5'-triphosphate + ADP. Its function is as follows. Major role in the synthesis of nucleoside triphosphates other than ATP. The ATP gamma phosphate is transferred to the NDP beta phosphate via a ping-pong mechanism, using a phosphorylated active-site intermediate. The chain is Nucleoside diphosphate kinase from Sulfurovum sp. (strain NBC37-1).